A 390-amino-acid chain; its full sequence is Isotocin receptor (390 aa).

Over 1–48 the chain is Extracellular; the sequence is MEEMFKEQDFWSFNESSRNSTVGNETFGGNQTVNPLKRNEEVAKVEVT. N-linked (GlcNAc...) asparagine glycans are attached at residues Asn14, Asn19, Asn24, and Asn30. The chain crosses the membrane as a helical span at residues 49-69; that stretch reads VLALVLFLALAGNLCVLIAIY. Over 70–86 the chain is Cytoplasmic; sequence TAKHTQSRMYYLMKHLS. Residues 87–107 form a helical membrane-spanning segment; the sequence is IADLVVAVFQVLPQLIWDITF. At 108-124 the chain is on the extracellular side; sequence RFYGPDFLCRLVKYLQT. The cysteines at positions 116 and 191 are disulfide-linked. The helical transmembrane segment at 125–145 threads the bilayer; that stretch reads VGMFASTYMLVLMSIDRCIAI. Residues 146-160 are Cytoplasmic-facing; it reads CQPLRSLHKRKDRCY. A helical membrane pass occupies residues 161-181; sequence VIVSWALSLVFSVPQVYIFSL. The Extracellular segment spans residues 182 to 206; the sequence is REIGNGVYDCWGDFVQPWGAKAYIT. A helical transmembrane segment spans residues 207–227; that stretch reads WISLTIYIIPVAILGGCYGLI. Over 228–276 the chain is Cytoplasmic; that stretch reads SFKIWQNFKRKTKKDQCITLTTAASKANALARVSSVKLVSKAKITTVKM. The helical transmembrane segment at 277–297 threads the bilayer; it reads TFVIVLAYIVCWTPFFFVQMW. The Extracellular segment spans residues 298–311; the sequence is SAWDPEAPREAMPF. Residues 312 to 332 form a helical membrane-spanning segment; that stretch reads IISMLLASLNSCCNPWIYMFF. Residues 333 to 390 lie on the Cytoplasmic side of the membrane; it reads AGHLFHDLKQSLLCCSTLYLKSSQCRCDQEHDSRKSNCSTYVIKSTSSQRSITQSSIT.

The protein belongs to the G-protein coupled receptor 1 family. Vasopressin/oxytocin receptor subfamily. Expressed in brain, intestine, bladder, skeletal muscle, lateral line, gills and kidney.

Its subcellular location is the cell membrane. In terms of biological role, binds to isotocin. Can also be activated by vasotocin, mesotocin, oxytocin and Arg-vasopressin, although these have lower potencies than isotocin. Produces an induction of membrane chloride currents indicating that it is coupled to the inositol phosphate/calcium pathway. The sequence is that of Isotocin receptor from Catostomus commersonii (White sucker).